A 344-amino-acid chain; its full sequence is Phenylalanine--tRNA ligase alpha subunit (344 aa).

E255 is a binding site for Mg(2+).

This sequence belongs to the class-II aminoacyl-tRNA synthetase family. Phe-tRNA synthetase alpha subunit type 1 subfamily. Tetramer of two alpha and two beta subunits. Requires Mg(2+) as cofactor.

Its subcellular location is the cytoplasm. The catalysed reaction is tRNA(Phe) + L-phenylalanine + ATP = L-phenylalanyl-tRNA(Phe) + AMP + diphosphate + H(+). In Persephonella marina (strain DSM 14350 / EX-H1), this protein is Phenylalanine--tRNA ligase alpha subunit.